The primary structure comprises 473 residues: Response regulator protein FleR (473 aa).

The 115-residue stretch at 4-118 folds into the Response regulatory domain; sequence KVLLVEDDRA…ALLDLVARHA (115 aa). Asp53 carries the 4-aspartylphosphate modification. The Sigma-54 factor interaction domain occupies 130–359; it reads PVALEPASRQ…LDNAIQRALI (230 aa). Residues 158–165 and 221–230 each bind ATP; these read GESGTGKE and ADGGTILLDE.

Functionally, member of the two-component regulatory system FleS/FleR that regulates the expression of multiple genes involved in flagellar synthesis, adhesion, swarming, motility and antibiotic resistance. May function as a transcriptional activator by direct binding to a cis-acting sequence upstream of the target genes. This chain is Response regulator protein FleR, found in Pseudomonas aeruginosa (strain ATCC 15692 / DSM 22644 / CIP 104116 / JCM 14847 / LMG 12228 / 1C / PRS 101 / PAO1).